The following is a 147-amino-acid chain: Allograft inflammatory factor 1 (147 aa).

Ser2 is modified (N-acetylserine). Residue Lys11 is modified to N6-acetyllysine. Ser39 carries the post-translational modification Phosphoserine. Residues 45–80 (SKLEAFKKKYMEFDLNEDGGIDIMSLKRMMEKLGVP) enclose the EF-hand 1 domain. Ca(2+) contacts are provided by Asp58, Asn60, and Asp62. Residues 81-115 (KTHLELKKLIMEVSSGPGETFSYSDFLKMMLGKRS) enclose the EF-hand 2; degenerate domain. Positions 128–147 (AREQEKPTGLPAKKAISELP) are disordered.

Post-translationally, phosphorylated on serine residues.

It localises to the cytoplasm. Its subcellular location is the cytoskeleton. The protein localises to the cell projection. It is found in the ruffle membrane. The protein resides in the phagocytic cup. Functionally, may play a role in macrophage activation and function. The chain is Allograft inflammatory factor 1 (AIF1) from Bos taurus (Bovine).